A 344-amino-acid polypeptide reads, in one-letter code: UDP-N-acetylenolpyruvoylglucosamine reductase (344 aa).

Residues 17-187 (VDYACSELIS…TGVGIKLAKK (171 aa)) enclose the FAD-binding PCMH-type domain. Arginine 163 is a catalytic residue. The Proton donor role is filled by serine 233. Glutamate 329 is an active-site residue.

It belongs to the MurB family. Requires FAD as cofactor.

Its subcellular location is the cytoplasm. The catalysed reaction is UDP-N-acetyl-alpha-D-muramate + NADP(+) = UDP-N-acetyl-3-O-(1-carboxyvinyl)-alpha-D-glucosamine + NADPH + H(+). It participates in cell wall biogenesis; peptidoglycan biosynthesis. Its function is as follows. Cell wall formation. The protein is UDP-N-acetylenolpyruvoylglucosamine reductase of Shewanella sediminis (strain HAW-EB3).